Consider the following 435-residue polypeptide: Serine--tRNA ligase (435 aa).

The segment at 48-68 (MKAQRNEASKKIGEAKRNGES) is disordered. Over residues 49–68 (KAQRNEASKKIGEAKRNGES) the composition is skewed to basic and acidic residues. 230-232 (TAE) contributes to the L-serine binding site. 261–263 (RSE) lines the ATP pocket. E284 provides a ligand contact to L-serine. Position 348-351 (348-351 (EVSS)) interacts with ATP. S383 serves as a coordination point for L-serine.

The protein belongs to the class-II aminoacyl-tRNA synthetase family. Type-1 seryl-tRNA synthetase subfamily. As to quaternary structure, homodimer. The tRNA molecule binds across the dimer.

Its subcellular location is the cytoplasm. The catalysed reaction is tRNA(Ser) + L-serine + ATP = L-seryl-tRNA(Ser) + AMP + diphosphate + H(+). The enzyme catalyses tRNA(Sec) + L-serine + ATP = L-seryl-tRNA(Sec) + AMP + diphosphate + H(+). The protein operates within aminoacyl-tRNA biosynthesis; selenocysteinyl-tRNA(Sec) biosynthesis; L-seryl-tRNA(Sec) from L-serine and tRNA(Sec): step 1/1. Its function is as follows. Catalyzes the attachment of serine to tRNA(Ser). Is also able to aminoacylate tRNA(Sec) with serine, to form the misacylated tRNA L-seryl-tRNA(Sec), which will be further converted into selenocysteinyl-tRNA(Sec). The protein is Serine--tRNA ligase of Limosilactobacillus reuteri (strain DSM 20016) (Lactobacillus reuteri).